Reading from the N-terminus, the 469-residue chain is Argininosuccinate lyase (469 aa).

The protein belongs to the lyase 1 family. Argininosuccinate lyase subfamily.

The protein localises to the cytoplasm. The catalysed reaction is 2-(N(omega)-L-arginino)succinate = fumarate + L-arginine. Its pathway is amino-acid biosynthesis; L-arginine biosynthesis; L-arginine from L-ornithine and carbamoyl phosphate: step 3/3. This Burkholderia cenocepacia (strain HI2424) protein is Argininosuccinate lyase.